The chain runs to 377 residues: Chaperone protein DnaJ (377 aa).

The region spanning 5–70 (DYYQVLGVSR…KKRSAYDQLG (66 aa)) is the J domain. The CR-type zinc-finger motif lies at 138-216 (GVTKIISFKT…CYGEGRYINT (79 aa)). Zn(2+) is bound by residues cysteine 151, cysteine 154, cysteine 168, cysteine 171, cysteine 190, cysteine 193, cysteine 204, and cysteine 207. CXXCXGXG motif repeat units lie at residues 151 to 158 (CDACAGKG), 168 to 175 (CPTCRGSG), 190 to 197 (CQTCRGAG), and 204 to 211 (CTKCYGEG).

Belongs to the DnaJ family. Homodimer. The cofactor is Zn(2+).

It is found in the cytoplasm. In terms of biological role, participates actively in the response to hyperosmotic and heat shock by preventing the aggregation of stress-denatured proteins and by disaggregating proteins, also in an autonomous, DnaK-independent fashion. Unfolded proteins bind initially to DnaJ; upon interaction with the DnaJ-bound protein, DnaK hydrolyzes its bound ATP, resulting in the formation of a stable complex. GrpE releases ADP from DnaK; ATP binding to DnaK triggers the release of the substrate protein, thus completing the reaction cycle. Several rounds of ATP-dependent interactions between DnaJ, DnaK and GrpE are required for fully efficient folding. Also involved, together with DnaK and GrpE, in the DNA replication of plasmids through activation of initiation proteins. The protein is Chaperone protein DnaJ of Orientia tsutsugamushi (strain Boryong) (Rickettsia tsutsugamushi).